The primary structure comprises 133 residues: Large ribosomal subunit protein eL32 (133 aa).

Belongs to the eukaryotic ribosomal protein eL32 family.

The sequence is that of Large ribosomal subunit protein eL32 (rpl32) from Dictyostelium discoideum (Social amoeba).